Here is a 190-residue protein sequence, read N- to C-terminus: Threonylcarbamoyl-AMP synthase (190 aa).

In terms of domain architecture, YrdC-like spans 7 to 190; sequence GDAIAAAIDV…ALTGELFRQG (184 aa).

The protein belongs to the SUA5 family. TsaC subfamily.

It is found in the cytoplasm. The enzyme catalyses L-threonine + hydrogencarbonate + ATP = L-threonylcarbamoyladenylate + diphosphate + H2O. Required for the formation of a threonylcarbamoyl group on adenosine at position 37 (t(6)A37) in tRNAs that read codons beginning with adenine. Catalyzes the conversion of L-threonine, HCO(3)(-)/CO(2) and ATP to give threonylcarbamoyl-AMP (TC-AMP) as the acyladenylate intermediate, with the release of diphosphate. This Escherichia coli O157:H7 protein is Threonylcarbamoyl-AMP synthase.